A 266-amino-acid polypeptide reads, in one-letter code: Elongation factor Ts (266 aa).

The involved in Mg(2+) ion dislocation from EF-Tu stretch occupies residues 80 to 83 (TDFV).

The protein belongs to the EF-Ts family.

It localises to the cytoplasm. Its function is as follows. Associates with the EF-Tu.GDP complex and induces the exchange of GDP to GTP. It remains bound to the aminoacyl-tRNA.EF-Tu.GTP complex up to the GTP hydrolysis stage on the ribosome. The polypeptide is Elongation factor Ts (Buchnera aphidicola subsp. Baizongia pistaciae (strain Bp)).